The sequence spans 142 residues: Large ribosomal subunit protein uL13 (142 aa).

It belongs to the universal ribosomal protein uL13 family. As to quaternary structure, part of the 50S ribosomal subunit.

Its function is as follows. This protein is one of the early assembly proteins of the 50S ribosomal subunit, although it is not seen to bind rRNA by itself. It is important during the early stages of 50S assembly. The chain is Large ribosomal subunit protein uL13 from Psychrobacter arcticus (strain DSM 17307 / VKM B-2377 / 273-4).